Reading from the N-terminus, the 242-residue chain is Ribosomal RNA small subunit methyltransferase G (242 aa).

S-adenosyl-L-methionine-binding positions include Gly-79, Phe-84, 130–131, and Arg-150; that span reads AE.

This sequence belongs to the methyltransferase superfamily. RNA methyltransferase RsmG family.

It localises to the cytoplasm. In terms of biological role, specifically methylates the N7 position of a guanine in 16S rRNA. The protein is Ribosomal RNA small subunit methyltransferase G of Levilactobacillus brevis (strain ATCC 367 / BCRC 12310 / CIP 105137 / JCM 1170 / LMG 11437 / NCIMB 947 / NCTC 947) (Lactobacillus brevis).